We begin with the raw amino-acid sequence, 164 residues long: CDP-archaeol synthase (164 aa).

Transmembrane regions (helical) follow at residues 3–23, 53–73, 77–97, and 126–146; these read LFVF…AVLA, GLAI…LLHP, LLDA…GAFI, and SLYA…TPII.

The protein belongs to the CDP-archaeol synthase family. Mg(2+) serves as cofactor.

It is found in the cell membrane. It carries out the reaction 2,3-bis-O-(geranylgeranyl)-sn-glycerol 1-phosphate + CTP + H(+) = CDP-2,3-bis-O-(geranylgeranyl)-sn-glycerol + diphosphate. It participates in membrane lipid metabolism; glycerophospholipid metabolism. Functionally, catalyzes the formation of CDP-2,3-bis-(O-geranylgeranyl)-sn-glycerol (CDP-archaeol) from 2,3-bis-(O-geranylgeranyl)-sn-glycerol 1-phosphate (DGGGP) and CTP. This reaction is the third ether-bond-formation step in the biosynthesis of archaeal membrane lipids. The protein is CDP-archaeol synthase of Pyrobaculum arsenaticum (strain DSM 13514 / JCM 11321 / PZ6).